A 66-amino-acid polypeptide reads, in one-letter code: Light-harvesting protein B-800-850 alpha chain B (66 aa).

At methionine 1 to asparagine 11 the chain is on the cytoplasmic side. A helical membrane pass occupies residues proline 12 to leucine 35. Histidine 31 contributes to the a bacteriochlorophyll binding site. The Periplasmic segment spans residues serine 36–lysine 66.

Belongs to the antenna complex alpha subunit family. The core complex is formed by different alpha and beta chains, binding bacteriochlorophyll molecules, and arranged most probably in tetrameric structures disposed around the reaction center. The non-pigmented gamma chains may constitute additional components.

The protein localises to the cell inner membrane. Its function is as follows. Antenna complexes are light-harvesting systems, which transfer the excitation energy to the reaction centers. The chain is Light-harvesting protein B-800-850 alpha chain B (pucAB) from Rhodopseudomonas palustris (strain ATCC BAA-98 / CGA009).